Here is a 226-residue protein sequence, read N- to C-terminus: Cytidylate kinase (226 aa).

An ATP-binding site is contributed by 14–22 (GPAGAGKST).

This sequence belongs to the cytidylate kinase family. Type 1 subfamily.

Its subcellular location is the cytoplasm. It catalyses the reaction CMP + ATP = CDP + ADP. It carries out the reaction dCMP + ATP = dCDP + ADP. This Symbiobacterium thermophilum (strain DSM 24528 / JCM 14929 / IAM 14863 / T) protein is Cytidylate kinase.